Here is a 394-residue protein sequence, read N- to C-terminus: Elongation factor Tu 2 (394 aa).

A tr-type G domain is found at Lys-10–Glu-204. The interval Gly-19–Thr-26 is G1. Gly-19–Thr-26 provides a ligand contact to GTP. Mg(2+) is bound at residue Thr-26. The interval Gly-60 to Asn-64 is G2. The interval Asp-81–Gly-84 is G3. GTP is bound by residues Asp-81–His-85 and Asn-136–Asp-139. Positions Asn-136–Asp-139 are G4. A G5 region spans residues Ser-174–Leu-176.

Belongs to the TRAFAC class translation factor GTPase superfamily. Classic translation factor GTPase family. EF-Tu/EF-1A subfamily. In terms of assembly, monomer.

The protein localises to the cytoplasm. The catalysed reaction is GTP + H2O = GDP + phosphate + H(+). Its function is as follows. GTP hydrolase that promotes the GTP-dependent binding of aminoacyl-tRNA to the A-site of ribosomes during protein biosynthesis. The protein is Elongation factor Tu 2 of Serratia proteamaculans (strain 568).